The primary structure comprises 273 residues: Large ribosomal subunit protein uL2 (273 aa).

A disordered region spans residues 222 to 273 (GVAMNPVDHPMGGGEGRSSGGRHPCTPWGVPTKGYRTRKSKRSDKLIVHRRK). Basic and acidic residues predominate over residues 264 to 273 (SDKLIVHRRK).

Belongs to the universal ribosomal protein uL2 family. Part of the 50S ribosomal subunit. Forms a bridge to the 30S subunit in the 70S ribosome.

One of the primary rRNA binding proteins. Required for association of the 30S and 50S subunits to form the 70S ribosome, for tRNA binding and peptide bond formation. It has been suggested to have peptidyltransferase activity; this is somewhat controversial. Makes several contacts with the 16S rRNA in the 70S ribosome. The protein is Large ribosomal subunit protein uL2 of Syntrophobacter fumaroxidans (strain DSM 10017 / MPOB).